A 148-amino-acid chain; its full sequence is SsrA-binding protein (148 aa).

A disordered region spans residues 124-148 (QFDKRETEKDRDWQREKARLMREKA).

The protein belongs to the SmpB family.

The protein localises to the cytoplasm. Functionally, required for rescue of stalled ribosomes mediated by trans-translation. Binds to transfer-messenger RNA (tmRNA), required for stable association of tmRNA with ribosomes. tmRNA and SmpB together mimic tRNA shape, replacing the anticodon stem-loop with SmpB. tmRNA is encoded by the ssrA gene; the 2 termini fold to resemble tRNA(Ala) and it encodes a 'tag peptide', a short internal open reading frame. During trans-translation Ala-aminoacylated tmRNA acts like a tRNA, entering the A-site of stalled ribosomes, displacing the stalled mRNA. The ribosome then switches to translate the ORF on the tmRNA; the nascent peptide is terminated with the 'tag peptide' encoded by the tmRNA and targeted for degradation. The ribosome is freed to recommence translation, which seems to be the essential function of trans-translation. This is SsrA-binding protein from Ralstonia pickettii (strain 12J).